We begin with the raw amino-acid sequence, 203 residues long: Peptidyl-prolyl cis-trans isomerase FKBP11 (203 aa).

An N-terminal signal peptide occupies residues 1 to 29; the sequence is MTLRPSLLPLRLLLLLLLLLRGAVCQAEA. A PPIase FKBP-type domain is found at 59 to 146; sequence GDTLHIHYSG…HFDVELIALI (88 aa). A helical transmembrane segment spans residues 158–178; the sequence is ILPLVGMAMVPALLGLIGYHL.

It belongs to the FKBP-type PPIase family. Interacts with IFITM5.

Its subcellular location is the membrane. It catalyses the reaction [protein]-peptidylproline (omega=180) = [protein]-peptidylproline (omega=0). Functionally, PPIases accelerate the folding of proteins during protein synthesis. The protein is Peptidyl-prolyl cis-trans isomerase FKBP11 (FKBP11) of Bos taurus (Bovine).